The chain runs to 159 residues: Putative 2'-deoxynucleoside 5'-phosphate N-hydrolase 1 (159 aa).

Substrate is bound by residues 25 to 31 (FLSGSIR), Y40, H58, E104, and 126 to 128 (SAM).

This sequence belongs to the 2'-deoxynucleoside 5'-phosphate N-hydrolase 1 family. As to quaternary structure, monomer and homodimer.

The enzyme catalyses a pyrimidine 2'-deoxyribonucleoside 5'-phosphate + H2O = a pyrimidine nucleobase + 2-deoxy-D-ribose 5-phosphate. It carries out the reaction a purine 2'-deoxyribonucleoside 5'-phosphate + H2O = a purine nucleobase + 2-deoxy-D-ribose 5-phosphate. In terms of biological role, catalyzes the cleavage of the N-glycosidic bond of deoxyribonucleoside 5'-monophosphates to yield deoxyribose 5-phosphate and a purine or pyrimidine base. The chain is Putative 2'-deoxynucleoside 5'-phosphate N-hydrolase 1 from Methanosarcina barkeri (strain Fusaro / DSM 804).